Reading from the N-terminus, the 79-residue chain is Panulirin (79 aa).

An N-terminal signal peptide occupies residues 1–22; sequence MKNKAVLMLMALFLVAVTQVHG. A propeptide spanning residues 23–26 is cleaved from the precursor; that stretch reads DPEP. 3 disulfide bridges follow: Cys-33/Cys-63, Cys-40/Cys-56, and Cys-46/Cys-64. The propeptide occupies 75–79; the sequence is QLLAA.

As to quaternary structure, monomer. In terms of processing, contains 3 disulfide bonds. In terms of tissue distribution, expressed in hemocytes (at protein level).

In terms of biological role, involved in the melanization cascade in response to lipopolysaccharide (LPS). In vitro, reversibly and competitively inhibits trypsin (Ki=8.6 nM) but not serine proteases chymotrypsin, elastase, subtilisin, thrombin and plasmin, cysteine peptidase papain or metallopeptidase carboxypeptidase A. This Panulirus argus (Caribbean spiny lobster) protein is Panulirin.